The following is a 94-amino-acid chain: Pyrimidine/purine nucleoside phosphorylase (94 aa).

The protein belongs to the nucleoside phosphorylase PpnP family.

The catalysed reaction is a purine D-ribonucleoside + phosphate = a purine nucleobase + alpha-D-ribose 1-phosphate. It carries out the reaction adenosine + phosphate = alpha-D-ribose 1-phosphate + adenine. It catalyses the reaction cytidine + phosphate = cytosine + alpha-D-ribose 1-phosphate. The enzyme catalyses guanosine + phosphate = alpha-D-ribose 1-phosphate + guanine. The catalysed reaction is inosine + phosphate = alpha-D-ribose 1-phosphate + hypoxanthine. It carries out the reaction thymidine + phosphate = 2-deoxy-alpha-D-ribose 1-phosphate + thymine. It catalyses the reaction uridine + phosphate = alpha-D-ribose 1-phosphate + uracil. The enzyme catalyses xanthosine + phosphate = alpha-D-ribose 1-phosphate + xanthine. In terms of biological role, catalyzes the phosphorolysis of diverse nucleosides, yielding D-ribose 1-phosphate and the respective free bases. Can use uridine, adenosine, guanosine, cytidine, thymidine, inosine and xanthosine as substrates. Also catalyzes the reverse reactions. The protein is Pyrimidine/purine nucleoside phosphorylase of Teredinibacter turnerae (strain ATCC 39867 / T7901).